A 315-amino-acid polypeptide reads, in one-letter code: Methionyl-tRNA formyltransferase (315 aa).

An N-terminal domain region spans residues 2–189 (SDSLRIIFAG…LITTLKQLAD (188 aa)). 113–116 (SLLP) contributes to the (6S)-5,6,7,8-tetrahydrofolate binding site. Positions 210–315 (KEEARIDWSL…EWFIPGNRLA (106 aa)) are C-terminal domain.

It belongs to the Fmt family.

It catalyses the reaction L-methionyl-tRNA(fMet) + (6R)-10-formyltetrahydrofolate = N-formyl-L-methionyl-tRNA(fMet) + (6S)-5,6,7,8-tetrahydrofolate + H(+). Its function is as follows. Attaches a formyl group to the free amino group of methionyl-tRNA(fMet). The formyl group appears to play a dual role in the initiator identity of N-formylmethionyl-tRNA by promoting its recognition by IF2 and preventing the misappropriation of this tRNA by the elongation apparatus. The chain is Methionyl-tRNA formyltransferase from Salmonella choleraesuis (strain SC-B67).